Consider the following 316-residue polypeptide: uncharacterized protein (316 aa).

This sequence to yeast YGR277c.

This is an uncharacterized protein from Schizosaccharomyces pombe (strain 972 / ATCC 24843) (Fission yeast).